Here is a 245-residue protein sequence, read N- to C-terminus: tRNA (guanine-N(1)-)-methyltransferase (245 aa).

Residues G108 and 127-132 each bind S-adenosyl-L-methionine; that span reads IGDYVL.

Belongs to the RNA methyltransferase TrmD family. In terms of assembly, homodimer.

It is found in the cytoplasm. It carries out the reaction guanosine(37) in tRNA + S-adenosyl-L-methionine = N(1)-methylguanosine(37) in tRNA + S-adenosyl-L-homocysteine + H(+). In terms of biological role, specifically methylates guanosine-37 in various tRNAs. This chain is tRNA (guanine-N(1)-)-methyltransferase, found in Lactobacillus delbrueckii subsp. bulgaricus (strain ATCC 11842 / DSM 20081 / BCRC 10696 / JCM 1002 / NBRC 13953 / NCIMB 11778 / NCTC 12712 / WDCM 00102 / Lb 14).